A 396-amino-acid polypeptide reads, in one-letter code: Adenosine deaminase 1 (396 aa).

Positions 1 to 26 (MTSRSTEKSAAANPAAVSKTPSPDRI) are disordered. H35 and H37 together coordinate Zn(2+). Residues H37, D39, and G197 each coordinate substrate. H224 is a binding site for Zn(2+). The Proton donor role is filled by E227. Zn(2+) is bound at residue D316.

It belongs to the metallo-dependent hydrolases superfamily. Adenosine and AMP deaminases family. Adenosine deaminase subfamily. Homotetramer. The cofactor is Zn(2+).

The enzyme catalyses adenosine + H2O + H(+) = inosine + NH4(+). The catalysed reaction is 2'-deoxyadenosine + H2O + H(+) = 2'-deoxyinosine + NH4(+). Its activity is regulated as follows. Coformycin and 2'-deoxycoformycin, whose structures mimic the transition state of the deamination reaction, are potent competitive inhibitors. Its function is as follows. Catalyzes the hydrolytic deamination of adenosine and 2-deoxyadenosine. The protein is Adenosine deaminase 1 of Streptomyces coelicolor (strain ATCC BAA-471 / A3(2) / M145).